We begin with the raw amino-acid sequence, 641 residues long: Probable ATP-dependent helicase YpvA (641 aa).

Residues 29–303 (YDILPEKGFD…EFAELIEDAL (275 aa)) enclose the Helicase ATP-binding domain. 64–71 (AGVGTGKT) lines the ATP pocket. [4Fe-4S] cluster contacts are provided by Cys133, Cys197, Cys200, and Cys206. The short motif at 257–260 (DEGH) is the DEGH box element.

The protein belongs to the helicase family. DinG subfamily. Requires [4Fe-4S] cluster as cofactor.

It catalyses the reaction Couples ATP hydrolysis with the unwinding of duplex DNA at the replication fork by translocating in the 5'-3' direction. This creates two antiparallel DNA single strands (ssDNA). The leading ssDNA polymer is the template for DNA polymerase III holoenzyme which synthesizes a continuous strand.. The catalysed reaction is ATP + H2O = ADP + phosphate + H(+). Functionally, might be a 5'-3' DNA helicase. This is Probable ATP-dependent helicase YpvA (ypvA) from Bacillus subtilis (strain 168).